We begin with the raw amino-acid sequence, 392 residues long: Phosphoglycerate kinase (392 aa).

Substrate is bound by residues 21–23, R36, 59–62, R113, and R146; these read DFN and HLGR. ATP is bound by residues K197, E319, and 345 to 348; that span reads GGDT.

It belongs to the phosphoglycerate kinase family. In terms of assembly, monomer.

It localises to the cytoplasm. It carries out the reaction (2R)-3-phosphoglycerate + ATP = (2R)-3-phospho-glyceroyl phosphate + ADP. The protein operates within carbohydrate degradation; glycolysis; pyruvate from D-glyceraldehyde 3-phosphate: step 2/5. The protein is Phosphoglycerate kinase of Francisella tularensis subsp. tularensis (strain FSC 198).